Here is a 403-residue protein sequence, read N- to C-terminus: Alkaline protease 1 (403 aa).

An N-terminal signal peptide occupies residues 1–21; sequence MHSFKRSLLLLGALLPAVFGA. A propeptide spanning residues 22 to 124 is cleaved from the precursor; that stretch reads PVEPRRAAEK…QIWYIDALTS (103 aa). The Inhibitor I9 domain occupies 35–119; it reads KYIVTFKSGL…HVEEDQIWYI (85 aa). The region spanning 129–403 is the Peptidase S8 domain; the sequence is PWGLGAISHK…NLLAYNGADE (275 aa). Active-site charge relay system residues include Asp-161 and His-192. N-linked (GlcNAc...) asparagine glycosylation occurs at Asn-252. The Charge relay system role is filled by Ser-348.

This sequence belongs to the peptidase S8 family.

It localises to the secreted. The enzyme catalyses Hydrolysis of proteins with broad specificity, and of Bz-Arg-OEt &gt; Ac-Tyr-OEt. Does not hydrolyze peptide amides.. Secreted alkaline protease that allows assimilation of proteinaceous substrates. This Emericella nidulans (strain FGSC A4 / ATCC 38163 / CBS 112.46 / NRRL 194 / M139) (Aspergillus nidulans) protein is Alkaline protease 1 (alp1).